The sequence spans 181 residues: Endoglucanase (181 aa).

C4 and C16 are oxidised to a cystine. Residue D24 is the Nucleophile of the active site. Disulfide bonds link C30–C69, C32–C176, C65–C178, C72–C157, and C103–C113. D132 (proton donor) is an active-site residue.

In terms of tissue distribution, digestive gland.

It catalyses the reaction Endohydrolysis of (1-&gt;4)-beta-D-glucosidic linkages in cellulose, lichenin and cereal beta-D-glucans.. Its function is as follows. Active towards the soluble carboxymethylcellulose (CMC). Possesses expansin activity too. The chain is Endoglucanase from Mytilus edulis (Blue mussel).